Reading from the N-terminus, the 220-residue chain is Octanoyltransferase (220 aa).

The region spanning 29-217 (GRAPEMIWLL…CFEETFGPLP (189 aa)) is the BPL/LPL catalytic domain. Residues 68–75 (RGGQYTYH), 148–150 (AIG), and 161–163 (GLS) contribute to the substrate site. The active-site Acyl-thioester intermediate is Cys-179.

The protein belongs to the LipB family.

It localises to the cytoplasm. It carries out the reaction octanoyl-[ACP] + L-lysyl-[protein] = N(6)-octanoyl-L-lysyl-[protein] + holo-[ACP] + H(+). Its pathway is protein modification; protein lipoylation via endogenous pathway; protein N(6)-(lipoyl)lysine from octanoyl-[acyl-carrier-protein]: step 1/2. Its function is as follows. Catalyzes the transfer of endogenously produced octanoic acid from octanoyl-acyl-carrier-protein onto the lipoyl domains of lipoate-dependent enzymes. Lipoyl-ACP can also act as a substrate although octanoyl-ACP is likely to be the physiological substrate. This is Octanoyltransferase from Dinoroseobacter shibae (strain DSM 16493 / NCIMB 14021 / DFL 12).